The chain runs to 202 residues: B-cell CLL/lymphoma 7 protein family member B (202 aa).

The segment at 53-202 (DSKEKEKSKS…PAVPQTASES (150 aa)) is disordered. Residues 90–99 (ENSNQSSVSD) are compositionally biased toward polar residues. The span at 107–123 (SSTNSSPSPQQSESLSP) shows a compositional bias: low complexity. A phosphoserine mark is found at Ser114, Ser118, Ser120, Ser122, Ser127, Ser148, and Ser152.

The protein belongs to the BCL7 family.

Functionally, positive regulator of apoptosis. Plays a role in the Wnt signaling pathway, negatively regulating the expression of Wnt signaling components CTNNB1 and HMGA1. Involved in cell cycle progression, maintenance of the nuclear structure and stem cell differentiation. May play a role in lung tumor development or progression. In Bos taurus (Bovine), this protein is B-cell CLL/lymphoma 7 protein family member B (BCL7B).